We begin with the raw amino-acid sequence, 171 residues long: MSKDMLVNEGIRAREVRLIGANGDQIGVKSKAEALDMARNVNLDLVCVAPNAKPPVCRIMDYGKYRYEQQKKDKEARKKQKTINVKEVRLSPTIEDHDFNTKLRNARKFLSKGDKVKAAIRFRGRAITHSEIGRNVLERLAKECEDIAIVEAKPKMEGRSMFLVLAPKTDK.

It belongs to the IF-3 family. As to quaternary structure, monomer.

The protein resides in the cytoplasm. Functionally, IF-3 binds to the 30S ribosomal subunit and shifts the equilibrium between 70S ribosomes and their 50S and 30S subunits in favor of the free subunits, thus enhancing the availability of 30S subunits on which protein synthesis initiation begins. This Halalkalibacterium halodurans (strain ATCC BAA-125 / DSM 18197 / FERM 7344 / JCM 9153 / C-125) (Bacillus halodurans) protein is Translation initiation factor IF-3.